The sequence spans 396 residues: MPSGTVALAFSGGLDTTVCVPLLKEEYGYDDVIGVTVDVGQPDAEFAAARETAAALGVEHHVVDATAEFAALCFDAVRANATYQGYPLGTALARPVIADAILSVAEAEGCAALAHGCTGKGNDQLRFEAVWRASDHDVCAPVRELGLTREWEIEYAAERDLPVEAGNEGEWSIDTNLWSRSVEGGHLEEPDYQPPADIYAWTDAPSGETGTVDITFEAGVPVAVDGTAMEPVALIEALNDRAGSYGVGRTDMLEDRMLGLKVRENYEHPAATTLLAAHKALEGLVLTKAERDFTAAVSQQWAQKAYEGVVEHPLMDALNGYLDETQSAVSGTVTIAFEGGRARPIARESEHAVYSADAASFNTETVAGIEQADATGVAKYHGFQSRLANAAFDGNK.

9-17 (AFSGGLDTT) serves as a coordination point for ATP. Tyr86 is a binding site for L-citrulline. An ATP-binding site is contributed by Gly116. 3 residues coordinate L-aspartate: Thr118, Asn122, and Asp123. Asn122 contacts L-citrulline. Residues Arg126, Ser172, Ser181, Glu254, and Tyr266 each contribute to the L-citrulline site.

Belongs to the argininosuccinate synthase family. Type 1 subfamily. As to quaternary structure, homotetramer.

Its subcellular location is the cytoplasm. It catalyses the reaction L-citrulline + L-aspartate + ATP = 2-(N(omega)-L-arginino)succinate + AMP + diphosphate + H(+). The protein operates within amino-acid biosynthesis; L-arginine biosynthesis; L-arginine from L-ornithine and carbamoyl phosphate: step 2/3. The chain is Argininosuccinate synthase from Halobacterium salinarum (strain ATCC 700922 / JCM 11081 / NRC-1) (Halobacterium halobium).